The primary structure comprises 523 residues: Ribonuclease Y (523 aa).

The chain crosses the membrane as a helical span at residues 7–24 (LSSLASALLAGGGTYLVY). Residues 213–279 (LINVVNLPND…TRTIEALVED (67 aa)) enclose the KH domain. In terms of domain architecture, HD spans 339–432 (ALGHSLEVAN…VCAADALSAA (94 aa)).

This sequence belongs to the RNase Y family.

Its subcellular location is the cell membrane. Endoribonuclease that initiates mRNA decay. This Wolinella succinogenes (strain ATCC 29543 / DSM 1740 / CCUG 13145 / JCM 31913 / LMG 7466 / NCTC 11488 / FDC 602W) (Vibrio succinogenes) protein is Ribonuclease Y.